A 73-amino-acid polypeptide reads, in one-letter code: Large ribosomal subunit protein bL31 (73 aa).

4 residues coordinate Zn(2+): Cys16, Cys18, Cys38, and Cys41.

It belongs to the bacterial ribosomal protein bL31 family. Type A subfamily. In terms of assembly, part of the 50S ribosomal subunit. It depends on Zn(2+) as a cofactor.

Its function is as follows. Binds the 23S rRNA. The polypeptide is Large ribosomal subunit protein bL31 (Vibrio vulnificus (strain CMCP6)).